Here is a 101-residue protein sequence, read N- to C-terminus: Small ribosomal subunit protein uS14 (101 aa).

The protein belongs to the universal ribosomal protein uS14 family. In terms of assembly, part of the 30S ribosomal subunit. Contacts proteins S3 and S10.

Its function is as follows. Binds 16S rRNA, required for the assembly of 30S particles and may also be responsible for determining the conformation of the 16S rRNA at the A site. This chain is Small ribosomal subunit protein uS14, found in Neorickettsia sennetsu (strain ATCC VR-367 / Miyayama) (Ehrlichia sennetsu).